Reading from the N-terminus, the 150-residue chain is Peptide methionine sulfoxide reductase MsrB (150 aa).

A MsrB domain is found at 9 to 132 (EAELKRTLTK…NSAALKFIPF (124 aa)). Cysteine 121 serves as the catalytic Nucleophile.

This sequence belongs to the MsrB Met sulfoxide reductase family.

It carries out the reaction L-methionyl-[protein] + [thioredoxin]-disulfide + H2O = L-methionyl-(R)-S-oxide-[protein] + [thioredoxin]-dithiol. The chain is Peptide methionine sulfoxide reductase MsrB from Mycoplasma genitalium (strain ATCC 33530 / DSM 19775 / NCTC 10195 / G37) (Mycoplasmoides genitalium).